We begin with the raw amino-acid sequence, 96 residues long: Protein C4 (96 aa).

Glycine 2 carries N-myristoyl glycine; by host lipidation. The segment at 66-96 is disordered; that stretch reads STDDLQGEDSRQPMTLTPRQLTQDVSRRLLM. Positions 77 to 89 are enriched in polar residues; sequence QPMTLTPRQLTQD.

Belongs to the geminiviridae protein AC4/C4 family.

It localises to the host cell membrane. In terms of biological role, pathogenicity determinant. May act as a suppressor of RNA-mediated gene silencing, also known as post-transcriptional gene silencing (PTGS), a mechanism of plant viral defense that limits the accumulation of viral RNAs. This chain is Protein C4, found in Solanum lycopersicum (Tomato).